Reading from the N-terminus, the 888-residue chain is Endochitinase A1 (888 aa).

An N-terminal signal peptide occupies residues 1–22; it reads MVSSKLSFVATAVAALAPLASA. A GH18 domain is found at 29–338; it reads SNLAIYWGQG…DHMKDILLHC (310 aa). Glu-174 functions as the Proton donor in the catalytic mechanism. Disordered regions lie at residues 338–631, 743–799, and 813–855; these read CDPS…TTTA, PVTE…VSTS, and PLIL…YTQE. A compositionally biased stretch (low complexity) spans 344-617; that stretch reads VTSSSAIPSS…STDESSTTVG (274 aa). N-linked (GlcNAc...) asparagine glycosylation is present at Asn-622. Over residues 764 to 775 the composition is skewed to polar residues; sequence EGSNPTQPSGAS. N-linked (GlcNAc...) asparagine glycosylation occurs at Asn-780. Residues 835 to 855 show a composition bias toward polar residues; sequence PSGQNSGSSSHVPIPPSYTQE. Gly-863 carries the GPI-anchor amidated glycine lipid modification. Positions 864-888 are cleaved as a propeptide — removed in mature form; the sequence is AASRVTGLGHGLVLTVLTLSAFFVL.

It belongs to the glycosyl hydrolase 18 family. Chitinase class III subfamily.

Its subcellular location is the cell membrane. The protein localises to the secreted. It is found in the cell wall. The catalysed reaction is Random endo-hydrolysis of N-acetyl-beta-D-glucosaminide (1-&gt;4)-beta-linkages in chitin and chitodextrins.. The cyclic peptide natural product argifin acts as a specific inhibitor. In terms of biological role, GPI-anchored chitinase involved in the degradation of chitin, a component of the cell walls of fungi and exoskeletal elements of some animals (including worms and arthropods). Required to reshape the cell wall at the sites where cell wall remodeling and/or cell wall maturation actively take place such as sites of conidia formation. The polypeptide is Endochitinase A1 (chiA1) (Aspergillus fumigatus (strain ATCC MYA-4609 / CBS 101355 / FGSC A1100 / Af293) (Neosartorya fumigata)).